The following is a 47-amino-acid chain: Lysis protein for colicins E2 and E3 (47 aa).

An N-terminal signal peptide occupies residues 1–19; sequence MKKITGIILLLLAVIILSA. C20 carries N-palmitoyl cysteine lipidation. C20 carries S-diacylglycerol cysteine lipidation.

The protein resides in the cell outer membrane. Lysis proteins are required for both colicin release and partial cell lysis. This chain is Lysis protein for colicins E2 and E3 (hic), found in Escherichia coli.